Reading from the N-terminus, the 399-residue chain is Lovastatin esterase (399 aa).

Ser-57 serves as the catalytic Nucleophile. Residues Lys-60 and Tyr-170 each act as proton acceptor in the active site.

This sequence belongs to the class-A beta-lactamase family.

It catalyses the reaction lovastatin + H2O = monacolin J + (S)-2-methylbutanoate + H(+). It carries out the reaction pravastatin lactone + H2O = pravastatin diol lactone + (S)-2-methylbutanoate + H(+). The catalysed reaction is mevastatin + H2O = compactin diol lactone + (S)-2-methylbutanoate + H(+). Its function is as follows. Esterase that can hydrolyze the side chain of lovastatin to produce monacolin J. Is also able to hydrolyze the side chains of mevastatin and pravastatin, but not simvastatin. The polypeptide is Lovastatin esterase (Penicillium rubens (strain ATCC 28089 / DSM 1075 / NRRL 1951 / Wisconsin 54-1255) (Penicillium chrysogenum)).